A 129-amino-acid polypeptide reads, in one-letter code: Small ribosomal subunit protein uS9 (129 aa).

It belongs to the universal ribosomal protein uS9 family.

The polypeptide is Small ribosomal subunit protein uS9 (Chlorobium luteolum (strain DSM 273 / BCRC 81028 / 2530) (Pelodictyon luteolum)).